A 198-amino-acid polypeptide reads, in one-letter code: Probable GTP-binding protein EngB (198 aa).

Residues 22-195 (DLPEIALAGR…WKAIHKFTKT (174 aa)) enclose the EngB-type G domain. GTP contacts are provided by residues 30 to 37 (GRSNVGKS), 57 to 61 (GKTQT), 75 to 78 (DVPG), 142 to 145 (TKAD), and 174 to 176 (FSS). Residues Ser37 and Thr59 each coordinate Mg(2+).

Belongs to the TRAFAC class TrmE-Era-EngA-EngB-Septin-like GTPase superfamily. EngB GTPase family. The cofactor is Mg(2+).

In terms of biological role, necessary for normal cell division and for the maintenance of normal septation. The sequence is that of Probable GTP-binding protein EngB from Bacillus cytotoxicus (strain DSM 22905 / CIP 110041 / 391-98 / NVH 391-98).